Consider the following 187-residue polypeptide: Elongation factor P (187 aa).

The protein belongs to the elongation factor P family.

The protein resides in the cytoplasm. The protein operates within protein biosynthesis; polypeptide chain elongation. Involved in peptide bond synthesis. Stimulates efficient translation and peptide-bond synthesis on native or reconstituted 70S ribosomes in vitro. Probably functions indirectly by altering the affinity of the ribosome for aminoacyl-tRNA, thus increasing their reactivity as acceptors for peptidyl transferase. This Chromobacterium violaceum (strain ATCC 12472 / DSM 30191 / JCM 1249 / CCUG 213 / NBRC 12614 / NCIMB 9131 / NCTC 9757 / MK) protein is Elongation factor P.